The following is a 199-amino-acid chain: mRNA export protein mlo3 (199 aa).

Residues 1 to 41 (MSMELDQSLDAIIASKPKGGIRKRRARSNKPKPTKNAKPAV) form a disordered region. The span at 19–35 (GGIRKRRARSNKPKPTK) shows a compositional bias: basic residues. The region spanning 55–134 (SKIIVSNLPT…RKMKVEIILD (80 aa)) is the RRM domain. Residues 144 to 199 (ARVSPASNASATASKNGAKSSKRKTTRRRRTPNRPKKSAEELDKEMDDYFGSNEKE) are disordered. A compositionally biased stretch (polar residues) spans 148 to 161 (PASNASATASKNGA). Over residues 163–179 (SSKRKTTRRRRTPNRPK) the composition is skewed to basic residues.

Interacts with rpn15/dss1, mex67 and uap56.

It localises to the nucleus. In terms of biological role, has a role in the mRNA export process. Interferes with mitotic chromosome segregation when overexpressed. In Schizosaccharomyces pombe (strain 972 / ATCC 24843) (Fission yeast), this protein is mRNA export protein mlo3 (mlo3).